We begin with the raw amino-acid sequence, 427 residues long: Glutamate-1-semialdehyde 2,1-aminomutase (427 aa).

Lysine 265 carries the post-translational modification N6-(pyridoxal phosphate)lysine.

The protein belongs to the class-III pyridoxal-phosphate-dependent aminotransferase family. HemL subfamily. Homodimer. The cofactor is pyridoxal 5'-phosphate.

It localises to the cytoplasm. It catalyses the reaction (S)-4-amino-5-oxopentanoate = 5-aminolevulinate. Its pathway is porphyrin-containing compound metabolism; protoporphyrin-IX biosynthesis; 5-aminolevulinate from L-glutamyl-tRNA(Glu): step 2/2. The sequence is that of Glutamate-1-semialdehyde 2,1-aminomutase from Stutzerimonas stutzeri (strain A1501) (Pseudomonas stutzeri).